The following is a 165-amino-acid chain: Thiol peroxidase (165 aa).

The Thioredoxin domain maps to proline 18–leucine 165. Cysteine 60 serves as the catalytic Cysteine sulfenic acid (-SOH) intermediate. The cysteines at positions 60 and 94 are disulfide-linked.

This sequence belongs to the peroxiredoxin family. Tpx subfamily. As to quaternary structure, homodimer.

It carries out the reaction a hydroperoxide + [thioredoxin]-dithiol = an alcohol + [thioredoxin]-disulfide + H2O. Thiol-specific peroxidase that catalyzes the reduction of hydrogen peroxide and organic hydroperoxides to water and alcohols, respectively. Plays a role in cell protection against oxidative stress by detoxifying peroxides. This Pasteurella multocida (strain Pm70) protein is Thiol peroxidase.